An 882-amino-acid polypeptide reads, in one-letter code: Translation initiation factor IF-2 (882 aa).

The tract at residues 28–296 (GIRKSADDSV…LQQGFQKPAQ (269 aa)) is disordered. Residues 67–81 (STLNIPGTGGKSKSV) show a composition bias toward polar residues. Basic and acidic residues predominate over residues 92-209 (VKRDPQEAER…RMAEENKWTD (118 aa)). Residues 244–258 (GRGRNAKAARPKKGN) show a composition bias toward basic residues. The segment covering 259–272 (KHAESKADREEARA) has biased composition (basic and acidic residues). The 170-residue stretch at 381-550 (PRAPVVTIMG…LLQAEVLELK (170 aa)) folds into the tr-type G domain. The G1 stretch occupies residues 390–397 (GHVDHGKT). Residue 390–397 (GHVDHGKT) participates in GTP binding. Positions 415–419 (GITQH) are G2. Positions 436–439 (DTPG) are G3. Residues 436–440 (DTPGH) and 490–493 (NKID) each bind GTP. The interval 490–493 (NKID) is G4. The G5 stretch occupies residues 526–528 (SAK). Lysine 800 is modified (N6-acetyllysine).

Belongs to the TRAFAC class translation factor GTPase superfamily. Classic translation factor GTPase family. IF-2 subfamily.

Its subcellular location is the cytoplasm. One of the essential components for the initiation of protein synthesis. Protects formylmethionyl-tRNA from spontaneous hydrolysis and promotes its binding to the 30S ribosomal subunits. Also involved in the hydrolysis of GTP during the formation of the 70S ribosomal complex. The polypeptide is Translation initiation factor IF-2 (Shigella boydii serotype 4 (strain Sb227)).